The primary structure comprises 282 residues: MTHWPSPAKLNLFLYITGQRADGYHTLQTLFQFLDYGDTLHIEPRRDGEIHLLTPVNGVENEDNLIVRAAQLLMKIASESGRLPAGSGADISIEKRLPMGGGLGGGSSNAATVLVALNHLWQCGLSIDELATLGLTLGADVPVFVRGHAAFAEGVGEILTPVNPPEKWYLVAHPGVSIPTPVIFKDPQLPRNTPKRSIDTLLKCEFSNDCEVIARKRFREVDAALSWLLEYAPSRLTGTGACVFAEFDTESCARQVLEQAPEWLNAFVAKGVNLSPLHRELL.

Lys9 is an active-site residue. 98 to 108 is a binding site for ATP; it reads PMGGGLGGGSS. Asp140 is a catalytic residue.

This sequence belongs to the GHMP kinase family. IspE subfamily. Homodimer.

It carries out the reaction 4-CDP-2-C-methyl-D-erythritol + ATP = 4-CDP-2-C-methyl-D-erythritol 2-phosphate + ADP + H(+). It functions in the pathway isoprenoid biosynthesis; isopentenyl diphosphate biosynthesis via DXP pathway; isopentenyl diphosphate from 1-deoxy-D-xylulose 5-phosphate: step 3/6. Functionally, catalyzes the phosphorylation of the position 2 hydroxy group of 4-diphosphocytidyl-2C-methyl-D-erythritol. In Salmonella paratyphi A (strain ATCC 9150 / SARB42), this protein is 4-diphosphocytidyl-2-C-methyl-D-erythritol kinase.